Consider the following 228-residue polypeptide: 2,3-bisphosphoglycerate-dependent phosphoglycerate mutase (228 aa).

Substrate-binding positions include 7-14 (RHGESAWN), 20-21 (TG), R59, 86-89 (ERHY), K97, 113-114 (RR), and 182-183 (GN). H8 serves as the catalytic Tele-phosphohistidine intermediate. Catalysis depends on E86, which acts as the Proton donor/acceptor.

The protein belongs to the phosphoglycerate mutase family. BPG-dependent PGAM subfamily.

It carries out the reaction (2R)-2-phosphoglycerate = (2R)-3-phosphoglycerate. Its pathway is carbohydrate degradation; glycolysis; pyruvate from D-glyceraldehyde 3-phosphate: step 3/5. In terms of biological role, catalyzes the interconversion of 2-phosphoglycerate and 3-phosphoglycerate. This Fusobacterium nucleatum subsp. nucleatum (strain ATCC 25586 / DSM 15643 / BCRC 10681 / CIP 101130 / JCM 8532 / KCTC 2640 / LMG 13131 / VPI 4355) protein is 2,3-bisphosphoglycerate-dependent phosphoglycerate mutase.